The chain runs to 478 residues: ATP synthase subunit beta (478 aa).

164–171 (GGAGVGKT) contributes to the ATP binding site.

Belongs to the ATPase alpha/beta chains family. As to quaternary structure, F-type ATPases have 2 components, CF(1) - the catalytic core - and CF(0) - the membrane proton channel. CF(1) has five subunits: alpha(3), beta(3), gamma(1), delta(1), epsilon(1). CF(0) has three main subunits: a(1), b(2) and c(9-12). The alpha and beta chains form an alternating ring which encloses part of the gamma chain. CF(1) is attached to CF(0) by a central stalk formed by the gamma and epsilon chains, while a peripheral stalk is formed by the delta and b chains.

It localises to the cell membrane. The catalysed reaction is ATP + H2O + 4 H(+)(in) = ADP + phosphate + 5 H(+)(out). Its function is as follows. Produces ATP from ADP in the presence of a proton gradient across the membrane. The catalytic sites are hosted primarily by the beta subunits. The protein is ATP synthase subunit beta of Streptomyces avermitilis (strain ATCC 31267 / DSM 46492 / JCM 5070 / NBRC 14893 / NCIMB 12804 / NRRL 8165 / MA-4680).